The sequence spans 272 residues: Indole-3-glycerol phosphate synthase (272 aa).

The protein belongs to the TrpC family.

The catalysed reaction is 1-(2-carboxyphenylamino)-1-deoxy-D-ribulose 5-phosphate + H(+) = (1S,2R)-1-C-(indol-3-yl)glycerol 3-phosphate + CO2 + H2O. It participates in amino-acid biosynthesis; L-tryptophan biosynthesis; L-tryptophan from chorismate: step 4/5. In Mycobacterium leprae (strain Br4923), this protein is Indole-3-glycerol phosphate synthase.